The following is a 158-amino-acid chain: Acireductone dioxygenase (158 aa).

The Fe(2+) site is built by His-81, His-83, Glu-87, and His-126. 4 residues coordinate Ni(2+): His-81, His-83, Glu-87, and His-126.

The protein belongs to the acireductone dioxygenase (ARD) family. It depends on Fe(2+) as a cofactor. Requires Ni(2+) as cofactor.

The protein localises to the cytoplasm. It localises to the nucleus. It carries out the reaction 1,2-dihydroxy-5-(methylsulfanyl)pent-1-en-3-one + O2 = 4-methylsulfanyl-2-oxobutanoate + formate + 2 H(+). It catalyses the reaction 1,2-dihydroxy-5-(methylsulfanyl)pent-1-en-3-one + O2 = 3-(methylsulfanyl)propanoate + CO + formate + 2 H(+). It participates in amino-acid biosynthesis; L-methionine biosynthesis via salvage pathway; L-methionine from S-methyl-5-thio-alpha-D-ribose 1-phosphate: step 5/6. In terms of biological role, catalyzes 2 different reactions between oxygen and the acireductone 1,2-dihydroxy-3-keto-5-methylthiopentene (DHK-MTPene) depending upon the metal bound in the active site. Fe-containing acireductone dioxygenase (Fe-ARD) produces formate and 2-keto-4-methylthiobutyrate (KMTB), the alpha-ketoacid precursor of methionine in the methionine recycle pathway. Ni-containing acireductone dioxygenase (Ni-ARD) produces methylthiopropionate, carbon monoxide and formate, and does not lie on the methionine recycle pathway. The chain is Acireductone dioxygenase from Metarhizium robertsii (strain ARSEF 23 / ATCC MYA-3075) (Metarhizium anisopliae (strain ARSEF 23)).